The sequence spans 147 residues: Lysozyme C (147 aa).

The signal sequence occupies residues 1 to 18 (MRSLLILVLCFLPLAALG). The region spanning 19 to 147 (KVYGRCELAA…VHAWIRGCRL (129 aa)) is the C-type lysozyme domain. Intrachain disulfides connect cysteine 24/cysteine 145, cysteine 48/cysteine 133, cysteine 82/cysteine 98, and cysteine 94/cysteine 112.

Belongs to the glycosyl hydrolase 22 family. In terms of assembly, monomer.

The protein resides in the secreted. The catalysed reaction is Hydrolysis of (1-&gt;4)-beta-linkages between N-acetylmuramic acid and N-acetyl-D-glucosamine residues in a peptidoglycan and between N-acetyl-D-glucosamine residues in chitodextrins.. In terms of biological role, lysozymes have primarily a bacteriolytic function; those in tissues and body fluids are associated with the monocyte-macrophage system and enhance the activity of immunoagents. This chain is Lysozyme C (LYZ), found in Meleagris gallopavo (Wild turkey).